The following is a 463-amino-acid chain: Elongation factor 1-alpha (463 aa).

One can recognise a tr-type G domain in the interval 5-242; it reads KTHINIVVIG…DAILPPARPT (238 aa). The tract at residues 14–21 is G1; sequence GHVDSGKS. 14 to 21 lines the GTP pocket; that stretch reads GHVDSGKS. The G2 stretch occupies residues 70 to 74; the sequence is GITID. A G3 region spans residues 91–94; the sequence is DAPG. GTP contacts are provided by residues 91–95 and 153–156; these read DAPGH and NKMD. The G4 stretch occupies residues 153-156; that stretch reads NKMD. Residues 194–196 form a G5 region; the sequence is SGW. 5-glutamyl glycerylphosphorylethanolamine occurs at positions 301 and 374.

The protein belongs to the TRAFAC class translation factor GTPase superfamily. Classic translation factor GTPase family. EF-Tu/EF-1A subfamily.

Its subcellular location is the cytoplasm. In terms of biological role, this protein promotes the GTP-dependent binding of aminoacyl-tRNA to the A-site of ribosomes during protein biosynthesis. The sequence is that of Elongation factor 1-alpha from Bombyx mori (Silk moth).